The following is a 2194-amino-acid chain: PDZ and LIM domain protein Zasp (2194 aa).

The 83-residue stretch at 8–90 folds into the PDZ domain; it reads QIKLSRFDAQ…NFVITVQRGG (83 aa). The segment at 211–277 is disordered; it reads TGQSTPAFGN…KPPSTGGLPT (67 aa). Low complexity predominate over residues 228–253; sequence PQQLQQPQQQYNQHQQHYHQQQQQQQ. One can recognise an LIM zinc-binding 1 domain in the interval 280-339; it reads NICTECERLITGVFVRIKDKNLHVECFKCATCGTSLKNQGYYNFNNKLYCDIHAKQAAIN. Residues 415 to 435 are compositionally biased toward low complexity; the sequence is AATPQAATATDSPAATASSSD. 11 disordered regions span residues 415–436, 457–476, 511–558, 580–611, 623–692, 896–940, 1223–1260, 1297–1322, 1550–1632, 1646–1738, and 1815–1837; these read AATP…SSDN, VALA…DQPF, GAAA…AVEE, SRQS…YIPP, VQQV…TTSE, AAAA…PRGS, LTQK…QRTQ, QSQS…PPAN, LNAS…QQPE, QREQ…YGKT, and APPP…SGYQ. Positions 515–530 are enriched in low complexity; that stretch reads PKSPVSYPPQQQQQSP. 2 stretches are compositionally biased toward polar residues: residues 580–590 and 644–667; these read SRQSQRGSSFT and VGTS…TASA. The span at 676-692 shows a compositional bias: low complexity; that stretch reads SSDSYTSTSTTTTTTSE. Polar residues predominate over residues 1598–1610; it reads QTGSITTGQSYQG. Composition is skewed to low complexity over residues 1616-1630, 1646-1668, and 1699-1727; these read SEQS…YNQQ, QREQ…TRSQ, and SQSV…QNQS. 3 consecutive LIM zinc-binding domains span residues 2018-2078, 2079-2138, and 2139-2194; these read PLCN…KYLA, PTCS…LFTT, and KCFA…NHAR.

In terms of assembly, interacts with alpha-actinin (Actn). In terms of tissue distribution, expression is first detected in the proctodeum and the midgut primordium. In stage 11 embryos, expression is predominant in the leading edge of epidermal cells adjacent to the amnioserosa. Stage 12 embryos exhibit expression in the midgut and the leading edge. Expressed in several rows of germ band cells next to the leading edge at stage 14. Strong expression is visible in the midgut and pharyngeal muscles of stage 17 embryos. Also expressed in somatic muscles and visceral mesoderm. Colocalizes with mys (beta PS integrin) in myotendinous junctions and with Actn in muscle Z lines.

Its subcellular location is the cytoplasm. The protein resides in the cytoskeleton. Its function is as follows. Regulator of cell matrix adhesion having two related functions, one upstream of Actn organizing the Z line and the other downstream of integrins regulating assembly of integrin adhesion sites. Also required for the formation of myotendinous junctions in muscles. This Drosophila melanogaster (Fruit fly) protein is PDZ and LIM domain protein Zasp (Zasp52).